Consider the following 238-residue polypeptide: Purine nucleoside phosphorylase DeoD-type (238 aa).

His4 is an a purine D-ribonucleoside binding site. Phosphate-binding positions include Gly20, Arg24, Arg43, and 87 to 90 (RVGS). Residues 179–181 (EME) and 203–204 (SD) contribute to the a purine D-ribonucleoside site. Asp204 serves as the catalytic Proton donor.

It belongs to the PNP/UDP phosphorylase family. As to quaternary structure, homohexamer; trimer of homodimers.

The catalysed reaction is a purine D-ribonucleoside + phosphate = a purine nucleobase + alpha-D-ribose 1-phosphate. It catalyses the reaction a purine 2'-deoxy-D-ribonucleoside + phosphate = a purine nucleobase + 2-deoxy-alpha-D-ribose 1-phosphate. Functionally, catalyzes the reversible phosphorolytic breakdown of the N-glycosidic bond in the beta-(deoxy)ribonucleoside molecules, with the formation of the corresponding free purine bases and pentose-1-phosphate. This is Purine nucleoside phosphorylase DeoD-type from Haemophilus influenzae (strain 86-028NP).